The chain runs to 536 residues: Arylsulfatase K (536 aa).

An N-terminal signal peptide occupies residues 1 to 24 (MIQKCIALSLFLFSALPEDNIVRA). The Ca(2+) site is built by Asp-42 and Cys-82. The Nucleophile role is filled by Cys-82. Cys-82 carries the 3-oxoalanine (Cys) modification. Lys-130 lines the substrate pocket. N-linked (GlcNAc...) asparagine glycosylation occurs at Asn-195. His-253 lines the substrate pocket. Asn-264 carries N-linked (GlcNAc...) asparagine glycosylation. Positions 315 and 316 each coordinate Ca(2+). 3 N-linked (GlcNAc...) asparagine glycosylation sites follow: Asn-377, Asn-416, and Asn-501.

Belongs to the sulfatase family. It depends on Ca(2+) as a cofactor. In terms of processing, the conversion to 3-oxoalanine (also known as C-formylglycine, FGly), of a serine or cysteine residue in prokaryotes and of a cysteine residue in eukaryotes, is critical for catalytic activity.

It is found in the secreted. It localises to the lysosome. It carries out the reaction an aryl sulfate + H2O = a phenol + sulfate + H(+). It catalyses the reaction Hydrolysis of the 2-sulfate groups of the 2-O-sulfo-D-glucuronate residues of chondroitin sulfate, heparin and heparitin sulfate.. Catalyzes the hydrolysis of pseudosubstrates such as p-nitrocatechol sulfate and p-nitrophenyl sulfate. Catalyzes the hydrolysis of the 2-sulfate groups of the 2-O-sulfo-D-glucuronate residues of chondroitin sulfate, heparin and heparitin sulfate. Acts selectively on 2-sulfoglucuronate and lacks activity against 2-sulfoiduronate. This chain is Arylsulfatase K (arsk), found in Xenopus laevis (African clawed frog).